The following is a 335-amino-acid chain: Anthranilate phosphoribosyltransferase (335 aa).

5-phospho-alpha-D-ribose 1-diphosphate contacts are provided by residues Gly-79, 82 to 83, Thr-87, 89 to 92, 107 to 115, and Ser-119; these read GD, NIST, and KHGSRSVSS. Gly-79 provides a ligand contact to anthranilate. Residue Ser-91 coordinates Mg(2+). Arg-165 contributes to the anthranilate binding site. The Mg(2+) site is built by Asp-223 and Glu-224.

This sequence belongs to the anthranilate phosphoribosyltransferase family. Homodimer. Mg(2+) serves as cofactor.

It carries out the reaction N-(5-phospho-beta-D-ribosyl)anthranilate + diphosphate = 5-phospho-alpha-D-ribose 1-diphosphate + anthranilate. The protein operates within amino-acid biosynthesis; L-tryptophan biosynthesis; L-tryptophan from chorismate: step 2/5. Catalyzes the transfer of the phosphoribosyl group of 5-phosphorylribose-1-pyrophosphate (PRPP) to anthranilate to yield N-(5'-phosphoribosyl)-anthranilate (PRA). This chain is Anthranilate phosphoribosyltransferase, found in Helicobacter pylori (strain G27).